Reading from the N-terminus, the 308-residue chain is Spermidine synthase 1 (308 aa).

Positions 17–254 (PGWFSEISPL…GVIGFMLCST (238 aa)) constitute a PABS domain. Position 48 (glutamine 48) interacts with S-adenosyl 3-(methylsulfanyl)propylamine. Tyrosine 78 provides a ligand contact to putrescine. S-adenosyl 3-(methylsulfanyl)propylamine-binding positions include glutamine 79, aspartate 103, glutamate 123, 154–155 (DG), and aspartate 173. The active-site Proton acceptor is aspartate 173. Putrescine-binding positions include 173–176 (DSSD) and tyrosine 242.

Belongs to the spermidine/spermine synthase family.

It catalyses the reaction S-adenosyl 3-(methylsulfanyl)propylamine + putrescine = S-methyl-5'-thioadenosine + spermidine + H(+). The protein operates within amine and polyamine biosynthesis; spermidine biosynthesis; spermidine from putrescine: step 1/1. In Datura stramonium (Jimsonweed), this protein is Spermidine synthase 1.